Consider the following 576-residue polypeptide: Beta-bisabolene synthase (576 aa).

Arg-286, Asp-323, Asp-327, Arg-466, and Asn-469 together coordinate (2E,6E)-farnesyl diphosphate. Positions 323 and 327 each coordinate Mg(2+). The DDXXD motif motif lies at 323-327 (DDVYD). Mg(2+) is bound by residues Asn-469, Thr-473, and Glu-477.

The protein belongs to the terpene synthase family. Tpsb subfamily. Mg(2+) is required as a cofactor. The cofactor is Mn(2+).

In terms of biological role, produces almost exclusively beta-bisabolene and only traces of alpha-bisabolol from (2E,6E)-farnesyl diphosphate in fragrance biosynthesis. In Santalum austrocaledonicum (Sandalwood), this protein is Beta-bisabolene synthase.